A 115-amino-acid polypeptide reads, in one-letter code: T cell receptor beta variable 7-6 (115 aa).

A signal peptide spans 1–21; the sequence is MGTSLLCWVVLGFLGTDHTGA. The Ig-like domain occupies 22 to 115; that stretch reads GVSQSPRYKV…SAMYRCASSL (94 aa). Cysteines 42 and 111 form a disulfide.

As to quaternary structure, alpha-beta TR is a heterodimer composed of an alpha and beta chain; disulfide-linked. The alpha-beta TR is associated with the transmembrane signaling CD3 coreceptor proteins to form the TR-CD3 (TcR or TCR). The assembly of alpha-beta TR heterodimers with CD3 occurs in the endoplasmic reticulum where a single alpha-beta TR heterodimer associates with one CD3D-CD3E heterodimer, one CD3G-CD3E heterodimer and one CD247 homodimer forming a stable octameric structure. CD3D-CD3E and CD3G-CD3E heterodimers preferentially associate with TR alpha and TR beta chains, respectively. The association of the CD247 homodimer is the last step of TcR assembly in the endoplasmic reticulum and is required for transport to the cell surface.

It localises to the cell membrane. In terms of biological role, v region of the variable domain of T cell receptor (TR) beta chain that participates in the antigen recognition. Alpha-beta T cell receptors are antigen specific receptors which are essential to the immune response and are present on the cell surface of T lymphocytes. Recognize peptide-major histocompatibility (MH) (pMH) complexes that are displayed by antigen presenting cells (APC), a prerequisite for efficient T cell adaptive immunity against pathogens. Binding of alpha-beta TR to pMH complex initiates TR-CD3 clustering on the cell surface and intracellular activation of LCK that phosphorylates the ITAM motifs of CD3G, CD3D, CD3E and CD247 enabling the recruitment of ZAP70. In turn ZAP70 phosphorylates LAT, which recruits numerous signaling molecules to form the LAT signalosome. The LAT signalosome propagates signal branching to three major signaling pathways, the calcium, the mitogen-activated protein kinase (MAPK) kinase and the nuclear factor NF-kappa-B (NF-kB) pathways, leading to the mobilization of transcription factors that are critical for gene expression and essential for T cell growth and differentiation. The T cell repertoire is generated in the thymus, by V-(D)-J rearrangement. This repertoire is then shaped by intrathymic selection events to generate a peripheral T cell pool of self-MH restricted, non-autoaggressive T cells. Post-thymic interaction of alpha-beta TR with the pMH complexes shapes TR structural and functional avidity. In Homo sapiens (Human), this protein is T cell receptor beta variable 7-6.